Reading from the N-terminus, the 83-residue chain is Mu-theraphotoxin-Hhn2j 4 (83 aa).

A signal peptide spans 1-21 (MKASMFLALAGSVLLFVVGYA). Residues 22–48 (SESEEKEFPIELLSKIFAVDVFKGEER) constitute a propeptide that is removed on maturation. 3 disulfides stabilise this stretch: cysteine 50-cysteine 65, cysteine 57-cysteine 70, and cysteine 64-cysteine 77. Residue leucine 81 is modified to Leucine amide.

This sequence belongs to the neurotoxin 10 (Hwtx-1) family. 15 (Hntx-3) subfamily. In terms of assembly, monomer. As to expression, expressed by the venom gland.

The protein localises to the secreted. In terms of biological role, lethal neurotoxin. Selectively blocks tetrodotoxin-sensitive voltage-gated sodium channels (Nav). Does not affect tetrodotoxin-resistant voltage-gated sodium channels or calcium channels. This is Mu-theraphotoxin-Hhn2j 4 from Cyriopagopus hainanus (Chinese bird spider).